The following is a 188-amino-acid chain: HTH-type transcriptional regulator QacR (188 aa).

The HTH tetR-type domain occupies 1-61; that stretch reads MNLKDKILGV…EILNIEESKW (61 aa). The H-T-H motif DNA-binding region spans 24-43; it reads TTGEIVKLSESSKGNLYYHF.

In terms of assembly, homodimer. Binds cooperatively to DNA as a pair of dimers.

Functionally, transcriptional repressor of qacA. Binds to IR1, an unusually long 28 bp operator, which is located downstream from the qacA promoter and overlaps its transcription start site. QacR is induced from its IR1 site by binding to one of many structurally dissimilar cationic lipophilic compounds, which are also substrates of QacA. The sequence is that of HTH-type transcriptional regulator QacR (qacR) from Staphylococcus aureus (strain Mu50 / ATCC 700699).